A 547-amino-acid chain; its full sequence is T-complex protein 1 subunit gamma (547 aa).

Residue Gly-41 participates in ADP binding. Gly-41 lines the ATP pocket. Asp-92 lines the Mg(2+) pocket. Positions 93, 94, 95, 96, 161, and 162 each coordinate ADP. Residues Gly-93, Thr-94, and Thr-95 each coordinate ATP. Cys-365 and Cys-371 are disulfide-bonded. ADP is bound by residues Gly-410, Gly-481, Glu-482, Glu-496, and Lys-501. Gly-410 and Gly-481 together coordinate ATP. ATP is bound at residue Glu-496. A compositionally biased stretch (basic and acidic residues) spans 525–534 (HKKKGEDHGR). The tract at residues 525–547 (HKKKGEDHGRQPAAAPEAPQQAE) is disordered. Residues 535–547 (QPAAAPEAPQQAE) show a composition bias toward low complexity.

It belongs to the TCP-1 chaperonin family. As to quaternary structure, component of the chaperonin-containing T-complex (TRiC), a hexadecamer composed of two identical back-to-back stacked rings enclosing a protein folding chamber. Each ring is made up of eight different subunits: TCP1/CCT1, CCT2, CCT3, CCT4, CCT5, CCT6A/CCT6, CCT7, CCT8.

It localises to the cytoplasm. The catalysed reaction is ATP + H2O = ADP + phosphate + H(+). Functionally, component of the chaperonin-containing T-complex (TRiC), a molecular chaperone complex that assists the folding of actin, tubulin and other proteins upon ATP hydrolysis. The polypeptide is T-complex protein 1 subunit gamma (cct3) (Xenopus laevis (African clawed frog)).